We begin with the raw amino-acid sequence, 168 residues long: Thiol peroxidase (168 aa).

The Thioredoxin domain maps to 20-168; sequence PAVGSQLPAF…DYDKALAALA (149 aa). The Cysteine sulfenic acid (-SOH) intermediate role is filled by C62. Residues C62 and C96 are joined by a disulfide bond.

The protein belongs to the peroxiredoxin family. Tpx subfamily. Homodimer.

The enzyme catalyses a hydroperoxide + [thioredoxin]-dithiol = an alcohol + [thioredoxin]-disulfide + H2O. In terms of biological role, thiol-specific peroxidase that catalyzes the reduction of hydrogen peroxide and organic hydroperoxides to water and alcohols, respectively. Plays a role in cell protection against oxidative stress by detoxifying peroxides. The protein is Thiol peroxidase of Chlorobaculum tepidum (strain ATCC 49652 / DSM 12025 / NBRC 103806 / TLS) (Chlorobium tepidum).